The following is a 148-amino-acid chain: Deoxyuridine 5'-triphosphate nucleotidohydrolase (148 aa).

Residues 68 to 70 (RSG), asparagine 81, 85 to 87 (TID), and lysine 95 each bind substrate.

The protein belongs to the dUTPase family. Mg(2+) serves as cofactor.

The enzyme catalyses dUTP + H2O = dUMP + diphosphate + H(+). It functions in the pathway pyrimidine metabolism; dUMP biosynthesis; dUMP from dCTP (dUTP route): step 2/2. This enzyme is involved in nucleotide metabolism: it produces dUMP, the immediate precursor of thymidine nucleotides and it decreases the intracellular concentration of dUTP so that uracil cannot be incorporated into DNA. In Thermoanaerobacter sp. (strain X514), this protein is Deoxyuridine 5'-triphosphate nucleotidohydrolase.